Here is a 392-residue protein sequence, read N- to C-terminus: Chaperone protein DnaJ (392 aa).

A J domain is found at 2-67 (DYYSILGISK…QKRDSYDRFG (66 aa)). The CR-type zinc finger occupies 148–226 (GVEKELVVSG…CRGQGRVKDK (79 aa)). Residues Cys-161, Cys-164, Cys-178, Cys-181, Cys-200, Cys-203, Cys-214, and Cys-217 each coordinate Zn(2+). CXXCXGXG motif repeat units follow at residues 161-168 (CETCSGQG), 178-185 (CERCKGSG), 200-207 (CPECGGEG), and 214-221 (CSSCRGQG).

Belongs to the DnaJ family. In terms of assembly, homodimer. Zn(2+) is required as a cofactor.

It localises to the cytoplasm. In terms of biological role, participates actively in the response to hyperosmotic and heat shock by preventing the aggregation of stress-denatured proteins and by disaggregating proteins, also in an autonomous, DnaK-independent fashion. Unfolded proteins bind initially to DnaJ; upon interaction with the DnaJ-bound protein, DnaK hydrolyzes its bound ATP, resulting in the formation of a stable complex. GrpE releases ADP from DnaK; ATP binding to DnaK triggers the release of the substrate protein, thus completing the reaction cycle. Several rounds of ATP-dependent interactions between DnaJ, DnaK and GrpE are required for fully efficient folding. Also involved, together with DnaK and GrpE, in the DNA replication of plasmids through activation of initiation proteins. The chain is Chaperone protein DnaJ from Chlamydia pneumoniae (Chlamydophila pneumoniae).